The following is a 261-amino-acid chain: MRVALGIEYDGRQYFGWQRQAEVDSVQAQLERALSKVANEPIRVHCAGRTDAGVHATGQVVHFETNAIRKDSAWTLGVNVNLPDDIAVRWVKIVDDEFHARFSATARRYRYMIYNYDFRPGILRSGVSHYRGNIDADIMHQAAQQFVGEHDFTSFRALHCQSKTPFRSVHEVNVTRQGMYICVDIKANAFLHHMVRNIVGTLLEIGLGNQRPEWIPQLLDLKDRSQAAPTAKPNGLYMVDVTYPERYELPKLALGPLFMLD.

The active-site Nucleophile is the Asp-51. Tyr-109 is a binding site for substrate.

Belongs to the tRNA pseudouridine synthase TruA family. As to quaternary structure, homodimer.

The enzyme catalyses uridine(38/39/40) in tRNA = pseudouridine(38/39/40) in tRNA. In terms of biological role, formation of pseudouridine at positions 38, 39 and 40 in the anticodon stem and loop of transfer RNAs. The polypeptide is tRNA pseudouridine synthase A (Shewanella sediminis (strain HAW-EB3)).